A 630-amino-acid polypeptide reads, in one-letter code: MALPTARPLLGSCGTPALGSLLFLLFSLGWVQPSRTLAGETGQEAAPLDGVLANPPNISSLSPRQLLGFPCAEVSGLSTERVRELAVALAQKNVKLSTEQLRCLAHRLSEPPEDLDALPLDLLLFLNPDAFSGPQACTRFFSRITKANVDLLPRGAPERQRLLPAALACWGVRGSLLSEADVRALGGLACDLPGRFVAESAEVLLPRLVSCPGPLDQDQQEAARAALQGGGPPYGPPSTWSVSTMDALRGLLPVLGQPIIRSIPQGIVAAWRQRSSRDPSWRQPERTILRPRFRREVEKTACPSGKKAREIDESLIFYKKWELEACVDAALLATQMDRVNAIPFTYEQLDVLKHKLDELYPQGYPESVIQHLGYLFLKMSPEDIRKWNVTSLETLKALLEVNKGHEMSPQAPRRPLPQVATLIDRFVKGRGQLDKDTLDTLTAFYPGYLCSLSPEELSSVPPSSIWAVRPQDLDTCDPRQLDVLYPKARLAFQNMNGSEYFVKIQSFLGGAPTEDLKALSQQNVSMDLATFMKLRTDAVLPLTVAEVQKLLGPHVEGLKAEERHRPVRDWILRQRQDDLDTLGLGLQGGIPNGYLVLDLSMQEALSGTPCLLGPGPVLTVLALLLASTLA.

The first 36 residues, 1–36 (MALPTARPLLGSCGTPALGSLLFLLFSLGWVQPSRT), serve as a signal peptide directing secretion. N57 is a glycosylation site (N-linked (GlcNAc...) asparagine). A Phosphoserine; by FAM20C modification is found at S200. Residues 262 to 286 (SIPQGIVAAWRQRSSRDPSWRQPER) form a required for megakaryocyte-potentiating factor activity region. Residues C302 and C326 are joined by a disulfide bond. Residues N388, N496, and N523 are each glycosylated (N-linked (GlcNAc...) asparagine). A lipid anchor (GPI-anchor amidated serine) is attached at S606. A propeptide spans 607–630 (GTPCLLGPGPVLTVLALLLASTLA) (removed in mature form).

This sequence belongs to the mesothelin family. As to quaternary structure, interacts with MUC16. Post-translationally, both MPF and the cleaved form of mesothelin are N-glycosylated. Proteolytically cleaved by a furin-like convertase to generate megakaryocyte-potentiating factor (MPF), and the cleaved form of mesothelin. Expressed in lung. Expressed at low levels in heart, placenta and kidney. Expressed in mesothelial cells. Highly expressed in mesotheliomas, ovarian cancers, and some squamous cell carcinomas (at protein level).

The protein localises to the cell membrane. The protein resides in the golgi apparatus. It is found in the secreted. Functionally, membrane-anchored forms may play a role in cellular adhesion. In terms of biological role, megakaryocyte-potentiating factor (MPF) potentiates megakaryocyte colony formation in vitro. The chain is Mesothelin (MSLN) from Homo sapiens (Human).